A 133-amino-acid chain; its full sequence is Large-conductance mechanosensitive channel (133 aa).

2 helical membrane passes run 14-34 (VVDL…VTTL) and 73-93 (FITV…MVVV).

The protein belongs to the MscL family. In terms of assembly, homopentamer.

Its subcellular location is the cell membrane. Channel that opens in response to stretch forces in the membrane lipid bilayer. May participate in the regulation of osmotic pressure changes within the cell. The protein is Large-conductance mechanosensitive channel of Renibacterium salmoninarum (strain ATCC 33209 / DSM 20767 / JCM 11484 / NBRC 15589 / NCIMB 2235).